The sequence spans 610 residues: ABC transporter ATP-binding protein ARB1 (610 aa).

Residues 1–43 are disordered; the sequence is MPPVSASKAKRDAKKAEREAKKAAAGKTIRKLGRKKEAAAEES. Phosphoserine is present on residues Ser-43 and Ser-65. ABC transporter domains follow at residues 82–323 and 393–610; these read IKLS…TNQM and LAFD…NVVL. 114–121 contributes to the ATP binding site; that stretch reads GENGCGKS. Phosphoserine is present on Ser-196. 428–435 contributes to the ATP binding site; it reads GPNGVGKS. Thr-446 carries the phosphothreonine modification.

The protein belongs to the ABC transporter superfamily. ABCF family. EF3 subfamily. As to quaternary structure, interacts with LSG1.

Its subcellular location is the cytoplasm. The protein resides in the nucleus. The catalysed reaction is ATP + H2O = ADP + phosphate + H(+). ATPase that stimulates 40S and 60S ribosome biogenesis. Also involved in ribosome-associated quality control (RQC) pathway, a pathway that mediates ubiquitination and extraction of incompletely synthesized nascent chains for proteasomal degradation: localizes to the ribosomal E-site and stimulates VMS1-dependent tRNA cleavage. The polypeptide is ABC transporter ATP-binding protein ARB1 (ARB1) (Saccharomyces cerevisiae (strain ATCC 204508 / S288c) (Baker's yeast)).